The following is a 465-amino-acid chain: ATP synthase subunit beta (465 aa).

149 to 156 (GGAGVGKT) serves as a coordination point for ATP.

It belongs to the ATPase alpha/beta chains family. In terms of assembly, F-type ATPases have 2 components, CF(1) - the catalytic core - and CF(0) - the membrane proton channel. CF(1) has five subunits: alpha(3), beta(3), gamma(1), delta(1), epsilon(1). CF(0) has three main subunits: a(1), b(2) and c(9-12). The alpha and beta chains form an alternating ring which encloses part of the gamma chain. CF(1) is attached to CF(0) by a central stalk formed by the gamma and epsilon chains, while a peripheral stalk is formed by the delta and b chains.

Its subcellular location is the cell inner membrane. The enzyme catalyses ATP + H2O + 4 H(+)(in) = ADP + phosphate + 5 H(+)(out). In terms of biological role, produces ATP from ADP in the presence of a proton gradient across the membrane. The catalytic sites are hosted primarily by the beta subunits. The sequence is that of ATP synthase subunit beta from Dictyoglomus turgidum (strain DSM 6724 / Z-1310).